Reading from the N-terminus, the 539-residue chain is CTP synthase (539 aa).

Residues 1–268 form an amidoligase domain region; the sequence is MSFKSIFLTG…SDFLLNKLGF (268 aa). Ser14 is a CTP binding site. Ser14 is a UTP binding site. 15-20 lines the ATP pocket; the sequence is SLGKGL. Tyr55 is a binding site for L-glutamine. Position 72 (Asp72) interacts with ATP. Mg(2+) is bound by residues Asp72 and Glu142. CTP contacts are provided by residues 149–151, 188–193, and Lys224; these read DIE and KTKPTQ. UTP-binding positions include 188 to 193 and Lys224; that span reads KTKPTQ. Leu242 contacts ATP. The Glutamine amidotransferase type-1 domain occupies 294–532; sequence RIGLVGKYLE…IRAAKAYSLE (239 aa). Gly353 is an L-glutamine binding site. Catalysis depends on Cys380, which acts as the Nucleophile; for glutamine hydrolysis. L-glutamine-binding positions include 381–384, Glu404, and Arg460; that span reads LGMQ. Catalysis depends on residues His505 and Glu507.

Belongs to the CTP synthase family. As to quaternary structure, homotetramer.

The enzyme catalyses UTP + L-glutamine + ATP + H2O = CTP + L-glutamate + ADP + phosphate + 2 H(+). It catalyses the reaction L-glutamine + H2O = L-glutamate + NH4(+). It carries out the reaction UTP + NH4(+) + ATP = CTP + ADP + phosphate + 2 H(+). It functions in the pathway pyrimidine metabolism; CTP biosynthesis via de novo pathway; CTP from UDP: step 2/2. Allosterically activated by GTP, when glutamine is the substrate; GTP has no effect on the reaction when ammonia is the substrate. The allosteric effector GTP functions by stabilizing the protein conformation that binds the tetrahedral intermediate(s) formed during glutamine hydrolysis. Inhibited by the product CTP, via allosteric rather than competitive inhibition. In terms of biological role, catalyzes the ATP-dependent amination of UTP to CTP with either L-glutamine or ammonia as the source of nitrogen. May be involved in lipopolysaccharide biosynthesis, potentially channelling CTP directly to CMP-KDO synthetase. Regulates intracellular CTP levels through interactions with the four ribonucleotide triphosphates. The polypeptide is CTP synthase (Chlamydia trachomatis serovar D (strain ATCC VR-885 / DSM 19411 / UW-3/Cx)).